The following is a 436-amino-acid chain: Glutamate-1-semialdehyde 2,1-aminomutase (436 aa).

K272 is modified (N6-(pyridoxal phosphate)lysine).

The protein belongs to the class-III pyridoxal-phosphate-dependent aminotransferase family. HemL subfamily. In terms of assembly, homodimer. Pyridoxal 5'-phosphate is required as a cofactor.

The protein localises to the cytoplasm. It carries out the reaction (S)-4-amino-5-oxopentanoate = 5-aminolevulinate. The protein operates within porphyrin-containing compound metabolism; protoporphyrin-IX biosynthesis; 5-aminolevulinate from L-glutamyl-tRNA(Glu): step 2/2. Its pathway is porphyrin-containing compound metabolism; chlorophyll biosynthesis. The polypeptide is Glutamate-1-semialdehyde 2,1-aminomutase (Methylibium petroleiphilum (strain ATCC BAA-1232 / LMG 22953 / PM1)).